We begin with the raw amino-acid sequence, 253 residues long: Imidazole glycerol phosphate synthase subunit HisF (253 aa).

Catalysis depends on residues D11 and D130.

This sequence belongs to the HisA/HisF family. In terms of assembly, heterodimer of HisH and HisF.

The protein resides in the cytoplasm. It catalyses the reaction 5-[(5-phospho-1-deoxy-D-ribulos-1-ylimino)methylamino]-1-(5-phospho-beta-D-ribosyl)imidazole-4-carboxamide + L-glutamine = D-erythro-1-(imidazol-4-yl)glycerol 3-phosphate + 5-amino-1-(5-phospho-beta-D-ribosyl)imidazole-4-carboxamide + L-glutamate + H(+). It functions in the pathway amino-acid biosynthesis; L-histidine biosynthesis; L-histidine from 5-phospho-alpha-D-ribose 1-diphosphate: step 5/9. IGPS catalyzes the conversion of PRFAR and glutamine to IGP, AICAR and glutamate. The HisF subunit catalyzes the cyclization activity that produces IGP and AICAR from PRFAR using the ammonia provided by the HisH subunit. The protein is Imidazole glycerol phosphate synthase subunit HisF of Caldanaerobacter subterraneus subsp. tengcongensis (strain DSM 15242 / JCM 11007 / NBRC 100824 / MB4) (Thermoanaerobacter tengcongensis).